Here is a 468-residue protein sequence, read N- to C-terminus: Aspartate ammonia-lyase (468 aa).

L-aspartate-binding residues include threonine 99, serine 138, threonine 139, asparagine 140, and threonine 185. An SS loop region spans residues glycine 315 to asparagine 324. The Proton acceptor role is filled by serine 316. 2 residues coordinate L-aspartate: serine 317 and lysine 322.

It belongs to the class-II fumarase/aspartase family. Aspartase subfamily. In terms of assembly, homotetramer.

It catalyses the reaction L-aspartate = fumarate + NH4(+). In terms of biological role, catalyzes the reversible conversion of L-aspartate to fumarate and ammonia. The sequence is that of Aspartate ammonia-lyase (aspA) from Helicobacter pylori (strain ATCC 700392 / 26695) (Campylobacter pylori).